The following is a 450-amino-acid chain: UDP-N-acetylmuramoylalanine--D-glutamate ligase (450 aa).

119 to 125 (GSNGKTT) contacts ATP.

The protein belongs to the MurCDEF family.

It localises to the cytoplasm. The enzyme catalyses UDP-N-acetyl-alpha-D-muramoyl-L-alanine + D-glutamate + ATP = UDP-N-acetyl-alpha-D-muramoyl-L-alanyl-D-glutamate + ADP + phosphate + H(+). The protein operates within cell wall biogenesis; peptidoglycan biosynthesis. In terms of biological role, cell wall formation. Catalyzes the addition of glutamate to the nucleotide precursor UDP-N-acetylmuramoyl-L-alanine (UMA). The polypeptide is UDP-N-acetylmuramoylalanine--D-glutamate ligase (Bacillus cereus (strain G9842)).